A 108-amino-acid chain; its full sequence is Glutaredoxin-1 (108 aa).

In terms of domain architecture, Glutaredoxin spans Glu3–Arg106. The cysteines at positions 23 and 26 are disulfide-linked.

Belongs to the glutaredoxin family.

The protein resides in the virion. Functionally, has thioltransferase and dehydroascorbate reductase activities. This Ectromelia virus (strain Moscow) (ECTV) protein is Glutaredoxin-1 (OPG075).